Here is a 497-residue protein sequence, read N- to C-terminus: Cobyric acid synthase (497 aa).

In terms of domain architecture, GATase cobBQ-type spans 251–443 (DLKIGVVWYP…LHGLFDNDFF (193 aa)). Catalysis depends on C333, which acts as the Nucleophile. The active site involves H435.

This sequence belongs to the CobB/CobQ family. CobQ subfamily.

Its pathway is cofactor biosynthesis; adenosylcobalamin biosynthesis. Catalyzes amidations at positions B, D, E, and G on adenosylcobyrinic A,C-diamide. NH(2) groups are provided by glutamine, and one molecule of ATP is hydrogenolyzed for each amidation. This Carboxydothermus hydrogenoformans (strain ATCC BAA-161 / DSM 6008 / Z-2901) protein is Cobyric acid synthase.